The sequence spans 249 residues: Leucyl/phenylalanyl-tRNA--protein transferase (249 aa).

The tract at residues 1-21 (MSRTLPHLLSSDPASPFPPAE) is disordered.

The protein belongs to the L/F-transferase family.

It is found in the cytoplasm. It catalyses the reaction N-terminal L-lysyl-[protein] + L-leucyl-tRNA(Leu) = N-terminal L-leucyl-L-lysyl-[protein] + tRNA(Leu) + H(+). The enzyme catalyses N-terminal L-arginyl-[protein] + L-leucyl-tRNA(Leu) = N-terminal L-leucyl-L-arginyl-[protein] + tRNA(Leu) + H(+). It carries out the reaction L-phenylalanyl-tRNA(Phe) + an N-terminal L-alpha-aminoacyl-[protein] = an N-terminal L-phenylalanyl-L-alpha-aminoacyl-[protein] + tRNA(Phe). Its function is as follows. Functions in the N-end rule pathway of protein degradation where it conjugates Leu, Phe and, less efficiently, Met from aminoacyl-tRNAs to the N-termini of proteins containing an N-terminal arginine or lysine. The protein is Leucyl/phenylalanyl-tRNA--protein transferase of Xanthomonas campestris pv. campestris (strain 8004).